The following is a 434-amino-acid chain: UDP-N-acetylmuramoylalanine--D-glutamate ligase (434 aa).

ATP is bound at residue 126 to 132 (GTSGKTT).

This sequence belongs to the MurCDEF family.

The protein resides in the cytoplasm. It catalyses the reaction UDP-N-acetyl-alpha-D-muramoyl-L-alanine + D-glutamate + ATP = UDP-N-acetyl-alpha-D-muramoyl-L-alanyl-D-glutamate + ADP + phosphate + H(+). It functions in the pathway cell wall biogenesis; peptidoglycan biosynthesis. Its function is as follows. Cell wall formation. Catalyzes the addition of glutamate to the nucleotide precursor UDP-N-acetylmuramoyl-L-alanine (UMA). The sequence is that of UDP-N-acetylmuramoylalanine--D-glutamate ligase from Desulfovibrio desulfuricans (strain ATCC 27774 / DSM 6949 / MB).